A 116-amino-acid polypeptide reads, in one-letter code: Iron-sulfur cluster insertion protein ErpA (116 aa).

Residues Cys44, Cys108, and Cys110 each contribute to the iron-sulfur cluster site.

The protein belongs to the HesB/IscA family. In terms of assembly, homodimer. Requires iron-sulfur cluster as cofactor.

Its function is as follows. Required for insertion of 4Fe-4S clusters for at least IspG. In Ectopseudomonas mendocina (strain ymp) (Pseudomonas mendocina), this protein is Iron-sulfur cluster insertion protein ErpA.